The primary structure comprises 375 residues: Aminomethyltransferase (375 aa).

It belongs to the GcvT family. The glycine cleavage system is composed of four proteins: P, T, L and H.

The enzyme catalyses N(6)-[(R)-S(8)-aminomethyldihydrolipoyl]-L-lysyl-[protein] + (6S)-5,6,7,8-tetrahydrofolate = N(6)-[(R)-dihydrolipoyl]-L-lysyl-[protein] + (6R)-5,10-methylene-5,6,7,8-tetrahydrofolate + NH4(+). Its function is as follows. The glycine cleavage system catalyzes the degradation of glycine. The chain is Aminomethyltransferase from Cupriavidus metallidurans (strain ATCC 43123 / DSM 2839 / NBRC 102507 / CH34) (Ralstonia metallidurans).